The primary structure comprises 228 residues: 3,4-dihydroxy-2-butanone 4-phosphate synthase (228 aa).

Residues 37 to 38 (RE), aspartate 42, 150 to 154 (RPGHT), and glutamate 174 contribute to the D-ribulose 5-phosphate site. Glutamate 38 is a binding site for Mg(2+). Histidine 153 provides a ligand contact to Mg(2+).

It belongs to the DHBP synthase family. Homodimer. Requires Mg(2+) as cofactor. It depends on Mn(2+) as a cofactor.

The enzyme catalyses D-ribulose 5-phosphate = (2S)-2-hydroxy-3-oxobutyl phosphate + formate + H(+). Its pathway is cofactor biosynthesis; riboflavin biosynthesis; 2-hydroxy-3-oxobutyl phosphate from D-ribulose 5-phosphate: step 1/1. Its function is as follows. Catalyzes the conversion of D-ribulose 5-phosphate to formate and 3,4-dihydroxy-2-butanone 4-phosphate. The chain is 3,4-dihydroxy-2-butanone 4-phosphate synthase from Chloroherpeton thalassium (strain ATCC 35110 / GB-78).